Consider the following 275-residue polypeptide: 4-hydroxy-3-methylbut-2-enyl diphosphate reductase (275 aa).

Cysteine 12 is a [4Fe-4S] cluster binding site. Residues histidine 40 and histidine 70 each contribute to the (2E)-4-hydroxy-3-methylbut-2-enyl diphosphate site. Dimethylallyl diphosphate-binding residues include histidine 40 and histidine 70. Histidine 40 and histidine 70 together coordinate isopentenyl diphosphate. A [4Fe-4S] cluster-binding site is contributed by cysteine 92. Histidine 119 lines the (2E)-4-hydroxy-3-methylbut-2-enyl diphosphate pocket. Dimethylallyl diphosphate is bound at residue histidine 119. Position 119 (histidine 119) interacts with isopentenyl diphosphate. The Proton donor role is filled by glutamate 121. Threonine 151 provides a ligand contact to (2E)-4-hydroxy-3-methylbut-2-enyl diphosphate. Cysteine 181 contacts [4Fe-4S] cluster. (2E)-4-hydroxy-3-methylbut-2-enyl diphosphate is bound by residues serine 209, serine 210, asparagine 211, and serine 251. The dimethylallyl diphosphate site is built by serine 209, serine 210, asparagine 211, and serine 251. Isopentenyl diphosphate is bound by residues serine 209, serine 210, asparagine 211, and serine 251.

This sequence belongs to the IspH family. It depends on [4Fe-4S] cluster as a cofactor.

The enzyme catalyses isopentenyl diphosphate + 2 oxidized [2Fe-2S]-[ferredoxin] + H2O = (2E)-4-hydroxy-3-methylbut-2-enyl diphosphate + 2 reduced [2Fe-2S]-[ferredoxin] + 2 H(+). The catalysed reaction is dimethylallyl diphosphate + 2 oxidized [2Fe-2S]-[ferredoxin] + H2O = (2E)-4-hydroxy-3-methylbut-2-enyl diphosphate + 2 reduced [2Fe-2S]-[ferredoxin] + 2 H(+). It participates in isoprenoid biosynthesis; dimethylallyl diphosphate biosynthesis; dimethylallyl diphosphate from (2E)-4-hydroxy-3-methylbutenyl diphosphate: step 1/1. It functions in the pathway isoprenoid biosynthesis; isopentenyl diphosphate biosynthesis via DXP pathway; isopentenyl diphosphate from 1-deoxy-D-xylulose 5-phosphate: step 6/6. Functionally, catalyzes the conversion of 1-hydroxy-2-methyl-2-(E)-butenyl 4-diphosphate (HMBPP) into a mixture of isopentenyl diphosphate (IPP) and dimethylallyl diphosphate (DMAPP). Acts in the terminal step of the DOXP/MEP pathway for isoprenoid precursor biosynthesis. This is 4-hydroxy-3-methylbut-2-enyl diphosphate reductase from Thermotoga sp. (strain RQ2).